We begin with the raw amino-acid sequence, 195 residues long: Rubrerythrin (195 aa).

The Ferritin-like diiron domain occupies 1–150 (MKSLKGTKTA…KLAKNIEEGK (150 aa)). 10 residues coordinate Fe(3+): Glu20, Glu53, Glu98, Glu101, Glu132, His135, Cys162, Cys165, Cys178, and Cys181. Residues 157–195 (VVLWKCGNCGFIWEGAEAPLKCPACLHPQAYFEVFKETY) enclose the Rubredoxin-like domain.

As to quaternary structure, homodimer. Possesses two rubredoxin-like centers and two non-sulfur oxo-bridged di-iron centers per dimer. Fe(3+) is required as a cofactor.

It localises to the cytoplasm. Its function is as follows. May provide oxidative stress protection via catalytic reduction of intracellular hydrogen peroxide. The chain is Rubrerythrin (rbr) from Clostridium perfringens (strain 13 / Type A).